A 24-amino-acid polypeptide reads, in one-letter code: Glutamate dehydrogenase (24 aa).

It belongs to the Glu/Leu/Phe/Val dehydrogenases family. Homohexamer.

The protein resides in the cytoplasm. It carries out the reaction L-glutamate + NAD(+) + H2O = 2-oxoglutarate + NH4(+) + NADH + H(+). It catalyses the reaction L-glutamate + NADP(+) + H2O = 2-oxoglutarate + NH4(+) + NADPH + H(+). The chain is Glutamate dehydrogenase (gdhA) from Pyrococcus woesei.